Consider the following 319-residue polypeptide: Ribosomal RNA small subunit methyltransferase H (319 aa).

Residues 37 to 39 (GGY), Asp57, Phe96, Asp105, and Gln112 each bind S-adenosyl-L-methionine. A compositionally biased stretch (basic and acidic residues) spans 292–302 (RPDEREKERNP). A disordered region spans residues 292-319 (RPDEREKERNPRSRSARLRAVEKQGVPA).

Belongs to the methyltransferase superfamily. RsmH family.

The protein localises to the cytoplasm. The enzyme catalyses cytidine(1402) in 16S rRNA + S-adenosyl-L-methionine = N(4)-methylcytidine(1402) in 16S rRNA + S-adenosyl-L-homocysteine + H(+). Its function is as follows. Specifically methylates the N4 position of cytidine in position 1402 (C1402) of 16S rRNA. This is Ribosomal RNA small subunit methyltransferase H from Syntrophobacter fumaroxidans (strain DSM 10017 / MPOB).